The primary structure comprises 306 residues: Serine/threonine-protein kinase KIN28 (306 aa).

Positions 7-290 (YTKEKKVGEG…AVQCLESDYF (284 aa)) constitute a Protein kinase domain. Residues 13–21 (VGEGTYAVV) and Lys-36 contribute to the ATP site. Catalysis depends on Asp-129, which acts as the Proton acceptor. The residue at position 162 (Thr-162) is a Phosphothreonine; by CAK.

This sequence belongs to the protein kinase superfamily. CMGC Ser/Thr protein kinase family. CDC2/CDKX subfamily. As to quaternary structure, CCL1 and KIN28 form the TFIIK complex, a component of the TFIIH holo complex. Component of a complex consisting of KIN28, CCL1 and TFB3. Interacts with TFB3. Also interacts with HNT1 and HOG1. Post-translationally, phosphorylation of Thr-162 regulates the affinity of interaction between CCL1, KIN28 and TFB3. Thr-162 phosphorylation does not vary through the cell cycle and is necessary for full kinase activity.

The protein localises to the nucleus. The enzyme catalyses [DNA-directed RNA polymerase] + ATP = phospho-[DNA-directed RNA polymerase] + ADP + H(+). Catalytic component of the TFIIK complex (KIN28-CCL1 dimer) which is the protein kinase component of transcription factor IIH (TFIIH) and phosphorylates the C-terminal domain of RNA polymerase II during transition from transcription to elongation after preinitiation complex (PIC) formation, thereby positively regulating transcription. TFIIH (or factor B) is essential for both basal and activated transcription, and is involved in nucleotide excision repair (NER) of damaged DNA. TFIIH has DNA-dependent ATPase activity and is essential for polymerase II transcription in vitro. Essential for cell proliferation. The protein is Serine/threonine-protein kinase KIN28 (KIN28) of Saccharomyces cerevisiae (strain ATCC 204508 / S288c) (Baker's yeast).